We begin with the raw amino-acid sequence, 1039 residues long: Alpha-mannosidase 2C1 (1039 aa).

The Co(2+) site is built by His-259, Asp-261, Asp-371, and His-576. Catalysis depends on Asp-371, which acts as the Nucleophile.

It belongs to the glycosyl hydrolase 38 family. Requires Co(2+) as cofactor. In terms of tissue distribution, expressed in kidney and liver (at protein level). Widely expressed, with highest levels in lung, ovary and testis. Also detected at lower levels in heart, brain, liver, spleen, kidney and thymus.

The protein resides in the cytoplasm. It catalyses the reaction Hydrolysis of terminal, non-reducing alpha-D-mannose residues in alpha-D-mannosides.. With respect to regulation, inhibited by 1,4-dideoxy-1,4-imino-d-mannitol (DIM) and EDTA. Cleaves alpha 1,2-, alpha 1,3-, and alpha 1,6-linked mannose residues from glycoproteins. Involved in the degradation of free oligosaccharides in the cytoplasm. In Mus musculus (Mouse), this protein is Alpha-mannosidase 2C1.